A 178-amino-acid chain; its full sequence is Large ribosomal subunit protein uL6 (178 aa).

The protein belongs to the universal ribosomal protein uL6 family. Part of the 50S ribosomal subunit.

Functionally, this protein binds to the 23S rRNA, and is important in its secondary structure. It is located near the subunit interface in the base of the L7/L12 stalk, and near the tRNA binding site of the peptidyltransferase center. The sequence is that of Large ribosomal subunit protein uL6 from Frankia casuarinae (strain DSM 45818 / CECT 9043 / HFP020203 / CcI3).